A 167-amino-acid chain; its full sequence is Ureidoglycolate lyase (167 aa).

Belongs to the ureidoglycolate lyase family. Homodimer. Ni(2+) is required as a cofactor.

It catalyses the reaction (S)-ureidoglycolate = urea + glyoxylate. Its pathway is nitrogen metabolism; (S)-allantoin degradation. Functionally, catalyzes the catabolism of the allantoin degradation intermediate (S)-ureidoglycolate, generating urea and glyoxylate. Involved in the utilization of allantoin as nitrogen source. The polypeptide is Ureidoglycolate lyase (Pseudomonas fluorescens (strain SBW25)).